We begin with the raw amino-acid sequence, 459 residues long: ATP-dependent protease ATPase subunit HslU (459 aa).

Residues Val-26, 68–73 (GVGKTE), Asp-271, Glu-337, and Arg-409 each bind ATP.

It belongs to the ClpX chaperone family. HslU subfamily. As to quaternary structure, a double ring-shaped homohexamer of HslV is capped on each side by a ring-shaped HslU homohexamer. The assembly of the HslU/HslV complex is dependent on binding of ATP.

The protein resides in the cytoplasm. In terms of biological role, ATPase subunit of a proteasome-like degradation complex; this subunit has chaperone activity. The binding of ATP and its subsequent hydrolysis by HslU are essential for unfolding of protein substrates subsequently hydrolyzed by HslV. HslU recognizes the N-terminal part of its protein substrates and unfolds these before they are guided to HslV for hydrolysis. The protein is ATP-dependent protease ATPase subunit HslU of Xylella fastidiosa (strain 9a5c).